A 450-amino-acid polypeptide reads, in one-letter code: UDP-N-acetylmuramoylalanine--D-glutamate ligase (450 aa).

119–125 (GSNGKTT) contributes to the ATP binding site.

It belongs to the MurCDEF family.

Its subcellular location is the cytoplasm. The enzyme catalyses UDP-N-acetyl-alpha-D-muramoyl-L-alanine + D-glutamate + ATP = UDP-N-acetyl-alpha-D-muramoyl-L-alanyl-D-glutamate + ADP + phosphate + H(+). It participates in cell wall biogenesis; peptidoglycan biosynthesis. Functionally, cell wall formation. Catalyzes the addition of glutamate to the nucleotide precursor UDP-N-acetylmuramoyl-L-alanine (UMA). This Bacillus cereus (strain G9842) protein is UDP-N-acetylmuramoylalanine--D-glutamate ligase.